We begin with the raw amino-acid sequence, 306 residues long: tRNA dimethylallyltransferase (306 aa).

6–13 (GPTASGKS) is a binding site for ATP. 8-13 (TASGKS) serves as a coordination point for substrate.

Belongs to the IPP transferase family. In terms of assembly, monomer. It depends on Mg(2+) as a cofactor.

It catalyses the reaction adenosine(37) in tRNA + dimethylallyl diphosphate = N(6)-dimethylallyladenosine(37) in tRNA + diphosphate. Functionally, catalyzes the transfer of a dimethylallyl group onto the adenine at position 37 in tRNAs that read codons beginning with uridine, leading to the formation of N6-(dimethylallyl)adenosine (i(6)A). This Sphingopyxis alaskensis (strain DSM 13593 / LMG 18877 / RB2256) (Sphingomonas alaskensis) protein is tRNA dimethylallyltransferase.